Consider the following 357-residue polypeptide: Peptide chain release factor 1 (357 aa).

Position 234 is an N5-methylglutamine (Gln234).

Belongs to the prokaryotic/mitochondrial release factor family. Post-translationally, methylated by PrmC. Methylation increases the termination efficiency of RF1.

It localises to the cytoplasm. Peptide chain release factor 1 directs the termination of translation in response to the peptide chain termination codons UAG and UAA. This Frankia casuarinae (strain DSM 45818 / CECT 9043 / HFP020203 / CcI3) protein is Peptide chain release factor 1.